Reading from the N-terminus, the 184-residue chain is Peptidyl-tRNA hydrolase (184 aa).

Tyr-14 is a tRNA binding site. The active-site Proton acceptor is His-19. Positions 64, 66, and 112 each coordinate tRNA.

The protein belongs to the PTH family. As to quaternary structure, monomer.

The protein resides in the cytoplasm. It catalyses the reaction an N-acyl-L-alpha-aminoacyl-tRNA + H2O = an N-acyl-L-amino acid + a tRNA + H(+). Its function is as follows. Hydrolyzes ribosome-free peptidyl-tRNAs (with 1 or more amino acids incorporated), which drop off the ribosome during protein synthesis, or as a result of ribosome stalling. In terms of biological role, catalyzes the release of premature peptidyl moieties from peptidyl-tRNA molecules trapped in stalled 50S ribosomal subunits, and thus maintains levels of free tRNAs and 50S ribosomes. This Listeria innocua serovar 6a (strain ATCC BAA-680 / CLIP 11262) protein is Peptidyl-tRNA hydrolase.